Reading from the N-terminus, the 496-residue chain is Catalase-A (496 aa).

Active-site residues include H54 and N128. A heme-binding site is contributed by Y338. The Microbody targeting signal signature appears at 494–496 (SNL).

The protein belongs to the catalase family. Heme serves as cofactor.

It is found in the peroxisome matrix. It catalyses the reaction 2 H2O2 = O2 + 2 H2O. In terms of biological role, catalyzes the degradation of hydrogen peroxide (H(2)O(2)) generated by peroxisomal oxidases to water and oxygen, thereby protecting cells from the toxic effects of hydrogen peroxide. This chain is Catalase-A (catA), found in Dictyostelium discoideum (Social amoeba).